The sequence spans 255 residues: Large ribosomal subunit protein uL2 (255 aa).

The disordered stretch occupies residues P211–K235.

This sequence belongs to the universal ribosomal protein uL2 family.

The sequence is that of Large ribosomal subunit protein uL2 (rpl8) from Dictyostelium discoideum (Social amoeba).